The chain runs to 506 residues: Ribose import ATP-binding protein RbsA 2 (506 aa).

2 consecutive ABC transporter domains span residues 6–241 and 254–499; these read LSMT…VGRV and EKSN…SITI. Residue 38–45 coordinates ATP; sequence GENGAGKS.

It belongs to the ABC transporter superfamily. Ribose importer (TC 3.A.1.2.1) family. As to quaternary structure, the complex is composed of an ATP-binding protein (RbsA), two transmembrane proteins (RbsC) and a solute-binding protein (RbsB).

It is found in the cell inner membrane. It carries out the reaction D-ribose(out) + ATP + H2O = D-ribose(in) + ADP + phosphate + H(+). Functionally, part of the ABC transporter complex RbsABC involved in ribose import. Responsible for energy coupling to the transport system. The chain is Ribose import ATP-binding protein RbsA 2 from Agrobacterium fabrum (strain C58 / ATCC 33970) (Agrobacterium tumefaciens (strain C58)).